A 150-amino-acid chain; its full sequence is Helix-loop-helix protein hlh-12 (150 aa).

A disordered region spans residues 1–24; sequence MAKKPRVTKLNTDRRSRANERERQ. Basic and acidic residues predominate over residues 11–24; that stretch reads NTDRRSRANERERQ. Positions 13–26 are basic motif; it reads DRRSRANERERQRV. Residues 13 to 65 enclose the bHLH domain; that stretch reads DRRSRANERERQRVSEMNGMFDVLLNLLPPSHFKTRLSRVQILREATSYIIRL. The segment at 27-65 is helix-loop-helix motif; it reads SEMNGMFDVLLNLLPPSHFKTRLSRVQILREATSYIIRL.

As to quaternary structure, forms a heterodimer with helix-loop-helix protein hlh-2.

The protein resides in the nucleus. Its function is as follows. Transcription factor which binds the E box motif 5'-GCAGGTG-3'. Involved in migration of the gonadal leader cells; distal tip cells (DTCs) in hermaphrodites, and linker cells in males. Positively regulates expression of alpha integrin ina-1 and ADAMTS protease gon-1. This chain is Helix-loop-helix protein hlh-12, found in Caenorhabditis elegans.